The primary structure comprises 85 residues: Large ribosomal subunit protein bL27 (85 aa).

The disordered stretch occupies residues 1 to 22; the sequence is MAHKKAGGSTRNGRDSESKRLG.

It belongs to the bacterial ribosomal protein bL27 family.

This chain is Large ribosomal subunit protein bL27, found in Aliivibrio fischeri (strain ATCC 700601 / ES114) (Vibrio fischeri).